The primary structure comprises 378 residues: Ribosomal RNA large subunit methyltransferase G (378 aa).

The protein belongs to the methyltransferase superfamily. RlmG family.

It is found in the cytoplasm. It carries out the reaction guanosine(1835) in 23S rRNA + S-adenosyl-L-methionine = N(2)-methylguanosine(1835) in 23S rRNA + S-adenosyl-L-homocysteine + H(+). In terms of biological role, specifically methylates the guanine in position 1835 (m2G1835) of 23S rRNA. The chain is Ribosomal RNA large subunit methyltransferase G from Shigella boydii serotype 18 (strain CDC 3083-94 / BS512).